We begin with the raw amino-acid sequence, 962 residues long: Activity-dependent neuroprotective protein 2a (962 aa).

The C2H2-type 1 zinc-finger motif lies at 75 to 98 (LCCSLCWYSSRSVPTFRSHIHRCH). The C2H2-type 2; degenerate zinc finger occupies 108–130 (LMCPYCPFVSSPKVTEQHIQFFH). The C2H2-type 3; degenerate zinc-finger motif lies at 165 to 188 (YTCATCGYHDSLLYVMKKHVLVNH). The C2H2-type 4 zinc-finger motif lies at 219 to 244 (YHCKLCKLPAETIEHLLYHILSSEKH). The C2H2-type 5; degenerate zinc-finger motif lies at 527–547 (VKCLRCKILLTEQGIFQHLLH). 2 C2H2-type zinc fingers span residues 549–572 (LKCL…KKEH) and 650–673 (NACP…QTKH). The C2H2-type 8; degenerate zinc-finger motif lies at 688–712 (YKCIYCFGVYTEKSTPKTISIHVQR). The disordered stretch occupies residues 753–781 (QGAPEFPKPKKEAVTPRNRRRNTKASKTG). The segment at residues 795–854 (PMGMERTSFEDRKDFLSQYFHRKPYVTKTEIELLASRLWINKADVKAHFNSKLTKCLKAI) is a DNA-binding region (homeobox).

Its subcellular location is the nucleus. In terms of biological role, may be involved in transcriptional regulation. Required for progression through late erythroid differentiation. May be involved in vasculogenesis. This is Activity-dependent neuroprotective protein 2a from Danio rerio (Zebrafish).